The following is an 85-amino-acid chain: uncharacterized protein (85 aa).

An N-terminal signal peptide occupies residues 1-35 (MIEDPSKKISLWQKWINVDPKKRILFSLGLFALSA).

The protein resides in the secreted. This is an uncharacterized protein from Dictyostelium discoideum (Social amoeba).